A 304-amino-acid chain; its full sequence is UDP-N-acetylenolpyruvoylglucosamine reductase (304 aa).

Residues 33–198 (RVGGPADILV…IEATIELESG (166 aa)) enclose the FAD-binding PCMH-type domain. Arg177 is an active-site residue. Ser227 acts as the Proton donor in catalysis. Glu297 is a catalytic residue.

This sequence belongs to the MurB family. Requires FAD as cofactor.

The protein localises to the cytoplasm. It carries out the reaction UDP-N-acetyl-alpha-D-muramate + NADP(+) = UDP-N-acetyl-3-O-(1-carboxyvinyl)-alpha-D-glucosamine + NADPH + H(+). It functions in the pathway cell wall biogenesis; peptidoglycan biosynthesis. Functionally, cell wall formation. This chain is UDP-N-acetylenolpyruvoylglucosamine reductase, found in Clostridium perfringens (strain SM101 / Type A).